The sequence spans 322 residues: CRISPR-associated endonuclease Cas1 (322 aa).

3 residues coordinate Mn(2+): E149, H214, and E229.

Belongs to the CRISPR-associated endonuclease Cas1 family. Homodimer, forms a heterotetramer with a Cas2 homodimer. Mg(2+) serves as cofactor. It depends on Mn(2+) as a cofactor.

Functionally, CRISPR (clustered regularly interspaced short palindromic repeat), is an adaptive immune system that provides protection against mobile genetic elements (viruses, transposable elements and conjugative plasmids). CRISPR clusters contain spacers, sequences complementary to antecedent mobile elements, and target invading nucleic acids. CRISPR clusters are transcribed and processed into CRISPR RNA (crRNA). Acts as a dsDNA endonuclease. Involved in the integration of spacer DNA into the CRISPR cassette. This chain is CRISPR-associated endonuclease Cas1, found in Pyrococcus horikoshii (strain ATCC 700860 / DSM 12428 / JCM 9974 / NBRC 100139 / OT-3).